A 1427-amino-acid polypeptide reads, in one-letter code: A disintegrin and metalloproteinase with thrombospondin motifs 13 (1427 aa).

Positions 1 to 29 are cleaved as a signal peptide; that stretch reads MHQRHPRARCPPLCVAGILACGFLLGCWG. A propeptide spanning residues 30–74 is cleaved from the precursor; it reads PSHFQQSCLQALEPQAVSSYLSPGAPLKGRPPSPGFQRQRQRQRR. Residues 51 to 70 form a disordered region; it reads SPGAPLKGRPPSPGFQRQRQ. The Peptidase M12B domain occupies 80 to 286; it reads LHLELLVAVG…GRARCVWDPP (207 aa). Position 83 (E83) interacts with Ca(2+). N-linked (GlcNAc...) asparagine glycans are attached at residues N142 and N146. Cystine bridges form between C155-C208, C202-C281, and C242-C265. Residues D173, D182, E184, D187, and E212 each contribute to the Ca(2+) site. H224 lines the Zn(2+) pocket. E225 is a catalytic residue. Zn(2+) is bound by residues H228 and H234. 2 residues coordinate Ca(2+): C281 and D284. The Disintegrin domain maps to 287–383; it reads RPQPGSAGHP…LVELTPIAAV (97 aa). Disulfide bonds link C311-C337, C322-C347, C332-C366, and C360-C371. Positions 384-439 constitute a TSP type-1 1 domain; that stretch reads HGRWSSWGPRSPCSRSCGGGVVTRRRQCNNPRPAFGGRACVGADLQAEMCNTQACE. A glycan (C-linked (Man) tryptophan) is linked at W387. Disulfide bonds link C396–C433, C400–C438, C411–C423, C450–C487, C483–C522, C508–C527, C532–C548, and C545–C555. An O-linked (Fuc...) serine glycan is attached at S399. A cysteine-rich region spans residues 440–556; sequence KTQLEFMSQQ…VCGGDNSTCS (117 aa). The Cell attachment site signature appears at 498 to 500; sequence RGD. Residues N552, N579, and N614 are each glycosylated (N-linked (GlcNAc...) asparagine). The interval 556-685 is spacer; it reads SPRKGSFTAG…TYFQPKPRQA (130 aa). N-linked (GlcNAc...) (complex) asparagine glycosylation occurs at N667. 7 TSP type-1 domains span residues 682–730, 742–805, 808–859, 896–950, 951–1011, 1012–1068, and 1072–1131; these read PRQA…SQQP, CPPY…QPCP, WEVS…PEPC, VWTP…QAVP, CPAR…SLEP, CPPR…VPCL, and CTYR…GPCV. An O-linked (Fuc...) serine glycan is attached at S698. Residue N707 is glycosylated (N-linked (GlcNAc...) (complex) asparagine). S757 carries an O-linked (Fuc...) serine glycan. N-linked (GlcNAc...) asparagine glycosylation occurs at N828. Residues S907, S965, S1027, and S1087 are each glycosylated (O-linked (Fuc...) serine). CUB domains follow at residues 1192–1298 and 1299–1427; these read CGRQ…FYRE and CDMQ…KEGT. N-linked (GlcNAc...) asparagine glycosylation is found at N1235 and N1354.

Zn(2+) serves as cofactor. Requires Ca(2+) as cofactor. In terms of processing, glycosylated. O-fucosylated by POFUT2 on a serine or a threonine residue found within the consensus sequence C1-X(2)-(S/T)-C2-G of the TSP type-1 repeat domains where C1 and C2 are the first and second cysteine residue of the repeat, respectively. Fucosylated repeats can then be further glycosylated by the addition of a beta-1,3-glucose residue by the glucosyltransferase, B3GALTL. Fucosylation mediates the efficient secretion of ADAMTS13. May also be C-glycosylated on tryptophan residues within the consensus sequence W-X-X-W of the TPRs, and also N-glycosylated. These other glycosylations can also facilitate secretion. The precursor is processed by a furin endopeptidase which cleaves off the pro-domain. As to expression, plasma. Expressed primarily in liver.

It is found in the secreted. The catalysed reaction is The enzyme cleaves the von Willebrand factor at bond 842-Tyr-|-Met-843 within the A2 domain.. Zinc and calcium ions cooperatively modulate enzyme activity. The cleavage of the pro-domain is not required for protease activity. Dependence on calcium for proteolytic activity is mediated by the high affinity site. Cleaves the vWF multimers in plasma into smaller forms thereby controlling vWF-mediated platelet thrombus formation. The protein is A disintegrin and metalloproteinase with thrombospondin motifs 13 (ADAMTS13) of Homo sapiens (Human).